A 479-amino-acid polypeptide reads, in one-letter code: MFS-type transporter lnaF (479 aa).

11 consecutive transmembrane segments (helical) span residues 47-67, 71-91, 104-124, 136-156, 177-197, 208-228, 250-270, 283-303, 306-326, 344-364, and 372-392; these read WIYL…GFTP, GLII…SGAI, LLCI…GPLI, WCFY…VFLL, LVGL…LSWG, IIGL…VQWW, IFSF…PIWF, LMSI…AVLV, IGFY…GAGL, IPFG…VQAV, and LAIA…ISVA. N416 carries an N-linked (GlcNAc...) asparagine glycan. The helical transmembrane segment at 442–462 threads the bilayer; that stretch reads LAITQALYVGVALSSLAIVGA.

It belongs to the major facilitator superfamily. TCR/Tet family.

The protein resides in the cell membrane. MFS-type transporter; part of the lnb gene cluster that mediates the biosynthesis of diastereomeric piperazines. Lna and lnb clusters encode sets of enzymes that produce overlapping sets of previously undescribed metabolites such as piperazinomycin-like metabolites or morpholine. The lna and lnb biosynthetic pathways appear to be part of a signaling network that controls the formation of sclerotia, a resilient overwintering structure. May be involved in the secretion of the metabolites produced by the lna and lnb clusters. The polypeptide is MFS-type transporter lnaF (Aspergillus flavus (strain ATCC 200026 / FGSC A1120 / IAM 13836 / NRRL 3357 / JCM 12722 / SRRC 167)).